The primary structure comprises 165 residues: Small ribosomal subunit protein uS5 (165 aa).

Positions 10–73 constitute an S5 DRBM domain; it reads QIEKLISLNR…TSARKNLRFV (64 aa).

Belongs to the universal ribosomal protein uS5 family. As to quaternary structure, part of the 30S ribosomal subunit. Contacts proteins S4 and S8.

With S4 and S12 plays an important role in translational accuracy. Functionally, located at the back of the 30S subunit body where it stabilizes the conformation of the head with respect to the body. This Borreliella afzelii (strain PKo) (Borrelia afzelii) protein is Small ribosomal subunit protein uS5.